The sequence spans 122 residues: Protein MGF 100-1R (122 aa).

This sequence belongs to the asfivirus MGF 100 family.

In terms of biological role, plays a role in virus cell tropism, and may be required for efficient virus replication in macrophages. This chain is Protein MGF 100-1R, found in Ornithodoros (relapsing fever ticks).